The chain runs to 334 residues: Aspartate carbamoyltransferase catalytic subunit (334 aa).

2 residues coordinate carbamoyl phosphate: Arg71 and Thr72. Position 99 (Lys99) interacts with L-aspartate. 3 residues coordinate carbamoyl phosphate: Arg121, His151, and Gln154. The L-aspartate site is built by Arg184 and Arg239. Carbamoyl phosphate contacts are provided by Gly280 and Pro281.

Belongs to the aspartate/ornithine carbamoyltransferase superfamily. ATCase family. As to quaternary structure, heterododecamer (2C3:3R2) of six catalytic PyrB chains organized as two trimers (C3), and six regulatory PyrI chains organized as three dimers (R2).

It catalyses the reaction carbamoyl phosphate + L-aspartate = N-carbamoyl-L-aspartate + phosphate + H(+). It functions in the pathway pyrimidine metabolism; UMP biosynthesis via de novo pathway; (S)-dihydroorotate from bicarbonate: step 2/3. Catalyzes the condensation of carbamoyl phosphate and aspartate to form carbamoyl aspartate and inorganic phosphate, the committed step in the de novo pyrimidine nucleotide biosynthesis pathway. The protein is Aspartate carbamoyltransferase catalytic subunit of Pseudomonas putida (strain ATCC 47054 / DSM 6125 / CFBP 8728 / NCIMB 11950 / KT2440).